The primary structure comprises 535 residues: Intercellular adhesion molecule 1 (535 aa).

The first 27 residues, 1 to 27 (MALGAAPAAQLALLALLGTLLPGPGGA), serve as a signal peptide directing secretion. Over 28–480 (GISIHPSKAI…LNVLHGQNIL (453 aa)) the chain is Extracellular. Positions 41 to 102 (GDSLTVNCSN…SNCHKEQTIA (62 aa)) constitute an Ig-like C2-type 1 domain. Asn-47 carries N-linked (GlcNAc...) asparagine glycosylation. Intrachain disulfides connect Cys-48-Cys-91 and Cys-52-Cys-95. 2 N-linked (GlcNAc...) asparagine glycosylation sites follow: Asn-105 and Asn-131. The Ig-like C2-type 2 domain maps to 127–193 (GEELNLSCLV…FSCRWELDLR (67 aa)). Residues Cys-134 and Cys-186 are joined by a disulfide bond. Residues 151–153 (RGE) carry the Cell attachment site; atypical motif. 10 N-linked (GlcNAc...) asparagine glycosylation sites follow: Asn-183, Asn-202, Asn-236, Asn-262, Asn-302, Asn-341, Asn-357, Asn-366, Asn-404, and Asn-428. Residues 230–295 (GSRWPVNCTL…LKCSVTLGEV (66 aa)) form the Ig-like C2-type 3 domain. Cys-237 and Cys-288 are disulfide-bonded. One can recognise an Ig-like C2-type 4 domain in the interval 323–376 (WTTVTVECVTRDGAVVKLNGTSAVPPGPRAQLKLNASASDHRSNFSCSAALEIA). 4 disulfides stabilise this stretch: Cys-330-Cys-369, Cys-401-Cys-417, Cys-417-Cys-456, and Cys-429-Cys-456. Residues 410 to 463 (GSEQTLKCEAQGNPIPKLNCSRKGDGASLPIGDLRPVRREVAGTYLCRATSARG) enclose the Ig-like C2-type 5 domain. Residues 481–503 (DIVIPVVAVTLILGALGTAGYVY) traverse the membrane as a helical segment. Topologically, residues 504–535 (NYQRKIQKYELQKARKAQEEAALKLNAQSTPP) are cytoplasmic. Thr-533 bears the Phosphothreonine mark.

It belongs to the immunoglobulin superfamily. ICAM family. In terms of assembly, homodimer. Interacts with MUC1 and promotes cell aggregation in epithelial cells. Interacts with ARHGEF26/SGEF. Interacts (on T cell side) with CD81, CD247 and CD9 at immunological synapses between antigen-presenting cells and T cells. In terms of processing, monoubiquitinated, which is promoted by MARCH9 and leads to endocytosis.

The protein resides in the membrane. ICAM proteins are ligands for the leukocyte adhesion protein LFA-1 (integrin alpha-L/beta-2). During leukocyte trans-endothelial migration, ICAM1 engagement promotes the assembly of endothelial apical cups through ARHGEF26/SGEF and RHOG activation. This is Intercellular adhesion molecule 1 (ICAM1) from Bos taurus (Bovine).